The primary structure comprises 289 residues: ATP synthase gamma chain (289 aa).

Belongs to the ATPase gamma chain family. As to quaternary structure, F-type ATPases have 2 components, CF(1) - the catalytic core - and CF(0) - the membrane proton channel. CF(1) has five subunits: alpha(3), beta(3), gamma(1), delta(1), epsilon(1). CF(0) has three main subunits: a, b and c.

Its subcellular location is the cell inner membrane. In terms of biological role, produces ATP from ADP in the presence of a proton gradient across the membrane. The gamma chain is believed to be important in regulating ATPase activity and the flow of protons through the CF(0) complex. The sequence is that of ATP synthase gamma chain from Coxiella burnetii (strain Dugway 5J108-111).